The sequence spans 1392 residues: DNA-directed RNA polymerase subunit beta'' (1392 aa).

The Zn(2+) site is built by C224, C295, C302, and C305.

This sequence belongs to the RNA polymerase beta' chain family. RpoC2 subfamily. In plastids the minimal PEP RNA polymerase catalytic core is composed of four subunits: alpha, beta, beta', and beta''. When a (nuclear-encoded) sigma factor is associated with the core the holoenzyme is formed, which can initiate transcription. Zn(2+) serves as cofactor.

The protein resides in the plastid. It is found in the chloroplast. The enzyme catalyses RNA(n) + a ribonucleoside 5'-triphosphate = RNA(n+1) + diphosphate. Functionally, DNA-dependent RNA polymerase catalyzes the transcription of DNA into RNA using the four ribonucleoside triphosphates as substrates. This chain is DNA-directed RNA polymerase subunit beta'', found in Nicotiana tomentosiformis (Tobacco).